Consider the following 813-residue polypeptide: LPS-assembly protein LptD (813 aa).

A signal peptide spans 1–22 (MRRALRLLPLPLSIAICLPAMA).

This sequence belongs to the LptD family. As to quaternary structure, component of the lipopolysaccharide transport and assembly complex. Interacts with LptE and LptA.

Its subcellular location is the cell outer membrane. In terms of biological role, together with LptE, is involved in the assembly of lipopolysaccharide (LPS) at the surface of the outer membrane. The sequence is that of LPS-assembly protein LptD from Xanthomonas oryzae pv. oryzae (strain MAFF 311018).